We begin with the raw amino-acid sequence, 115 residues long: U31-theraphotoxin-Cg1b (115 aa).

A signal peptide spans Met1–Gly18. The propeptide occupies Arg19–Glu51. 4 disulfides stabilise this stretch: Cys52–Cys67, Cys60–Cys73, Cys64–Cys113, and Cys66–Cys86.

This sequence belongs to the neurotoxin 03 (Tx2) family. 02 subfamily. As to expression, expressed by the venom gland.

It is found in the secreted. Probable ion channel inhibitor. The chain is U31-theraphotoxin-Cg1b from Chilobrachys guangxiensis (Chinese earth tiger tarantula).